A 361-amino-acid chain; its full sequence is ATP phosphoribosyltransferase regulatory subunit (361 aa).

This sequence belongs to the class-II aminoacyl-tRNA synthetase family. HisZ subfamily. Heteromultimer composed of HisG and HisZ subunits.

It localises to the cytoplasm. Its pathway is amino-acid biosynthesis; L-histidine biosynthesis; L-histidine from 5-phospho-alpha-D-ribose 1-diphosphate: step 1/9. Functionally, required for the first step of histidine biosynthesis. May allow the feedback regulation of ATP phosphoribosyltransferase activity by histidine. The protein is ATP phosphoribosyltransferase regulatory subunit of Thermus thermophilus (strain ATCC 27634 / DSM 579 / HB8).